The chain runs to 214 residues: ATP phosphoribosyltransferase (214 aa).

This sequence belongs to the ATP phosphoribosyltransferase family. Short subfamily. In terms of assembly, heteromultimer composed of HisG and HisZ subunits.

It is found in the cytoplasm. It catalyses the reaction 1-(5-phospho-beta-D-ribosyl)-ATP + diphosphate = 5-phospho-alpha-D-ribose 1-diphosphate + ATP. It functions in the pathway amino-acid biosynthesis; L-histidine biosynthesis; L-histidine from 5-phospho-alpha-D-ribose 1-diphosphate: step 1/9. Catalyzes the condensation of ATP and 5-phosphoribose 1-diphosphate to form N'-(5'-phosphoribosyl)-ATP (PR-ATP). Has a crucial role in the pathway because the rate of histidine biosynthesis seems to be controlled primarily by regulation of HisG enzymatic activity. This is ATP phosphoribosyltransferase from Azoarcus sp. (strain BH72).